Here is a 69-residue protein sequence, read N- to C-terminus: Antimicrobial peptide Meucin-18 (69 aa).

The signal sequence occupies residues 1–16 (MVIFLAYFLVVNESEA). The propeptide occupies 38–69 (ERSVMNRDLENLFDPYQRNLEMDRLLKQLRNY).

This sequence belongs to the non-disulfide-bridged peptide (NDBP) superfamily. Medium-length antimicrobial peptide (group 3) family. In terms of tissue distribution, expressed by the venom gland.

It localises to the secreted. The protein localises to the target cell membrane. Functionally, amphipathic peptide that exhibits extensive cytolytic activities against both prokaryotic and eukaryotic cells. Acts by fastly disrupting the bacterial membrane. Is more potent against Gram-positive bacteria than against Gram-negative bacteria, and fungi (LC=25.1-8.3 uM). Shows potent activity against penicillin (MIC=3.0 uM) and methicillin (MIC=1.5-3.0 uM) resistant bacteria. Is lethal to the fungus Beauveria sp (LC=1.9 uM), a highly lethal pathogenic fungus to insects and resistant to many AMPs. Shows hemolytic activity against rabbit erythrocytes (37.7% of inhibition at 6.25 uM) and cytolysis against rat dorsal root ganglions. May act by disrupting the integrity of the bacterial cell membrane. Antibiotic activity is not affected by major negatively charged components of the prokaryotic cell wall (e.g. lipopolysaccharides and lipoteichoic acid). In vivo, intravenous injection into mice tail provokes uncomfortable symptoms with a death rate of 12.5%. In vivo, in a mouse model of lethal peritonitis, shows potent antibiotic activity without cytotoxicity, improving the survival rate. The polypeptide is Antimicrobial peptide Meucin-18 (Mesobuthus eupeus (Lesser Asian scorpion)).